A 482-amino-acid polypeptide reads, in one-letter code: CBL-interacting serine/threonine-protein kinase 23 (482 aa).

Over residues 1-25 the composition is skewed to low complexity; that stretch reads MASRTTPSRSTPSRSTPSGSSSGGR. The disordered stretch occupies residues 1–29; that stretch reads MASRTTPSRSTPSRSTPSGSSSGGRTRVG. The Protein kinase domain occupies 31 to 286; the sequence is YELGRTLGEG…FAEVIENEWF (256 aa). Residues 37–45 and Lys60 each bind ATP; that span reads LGEGTFAKV. The active-site Proton acceptor is the Asp154. The tract at residues 172–201 is activation loop; it reads DFGLSALPQQVREDGLLHTTCGTPNYVAPE. Ser176 carries the post-translational modification Phosphoserine. Phosphothreonine is present on Thr190. An NAF domain is found at 328–352; it reads KTPVTMNAFELISTSQGLNLGSLFE. Residues 359–388 are PPI; that stretch reads KRKTRFTSKSSANEIVTKIEAAAAPMGFDV. The interval 459-482 is disordered; that stretch reads KEEGTDGGGTNGAMANRTIAKQST.

Belongs to the protein kinase superfamily. CAMK Ser/Thr protein kinase family. SNF1 subfamily. As to quaternary structure, part of a K(+)-channel calcium-sensing kinase/phosphatase complex composed by a calcium sensor CBL (CBL1, CBL2, CBL3 or CBL9), a kinase CIPK (CIPK6, CIPK16 or CIPK23), a phosphatase PP2C (AIP1) and a K(+)-channel (AKT1). Interacts with AKT1, CBL1, CBL2, CBL3, CBL5, CBL8, CBL9 and NRT1.1. Mn(2+) serves as cofactor. Post-translationally, autophosphorylated. In terms of tissue distribution, in seedlings, mostly in vascular bundles, and in roots, especially in cortex and endodermis cells. In adult plants, mostly expressed in flowers, and, to a lower extent, in roots, leaves, stems and siliques, particularly in vascular tissues. Also detected in guard cells and root hairs.

The protein resides in the cell membrane. It catalyses the reaction L-seryl-[protein] + ATP = O-phospho-L-seryl-[protein] + ADP + H(+). It carries out the reaction L-threonyl-[protein] + ATP = O-phospho-L-threonyl-[protein] + ADP + H(+). In terms of biological role, CIPK serine-threonine protein kinases interact with CBL proteins. Binding of a CBL protein to the regulatory NAF domain of CIPK protein leads to activation of the kinase in a calcium-dependent manner. Downstream of CBL1, CBL2, CBL3 and CBL9, regulates by phosphorylation the K(+) conductance and uptake of AKT1 in low K(+) condition, in response to calcium signaling and during the stomatal opening regulation by monitoring the turgor pressure in guard cells. In response to low nitrate concentration, phosphorylates NRT1.1, switching it from a low-affinity nitrate transporter to a high-affinity transporter. Confers tolerance to low potassium conditions. Involved in drought sensitivity and leaf transpiration. The chain is CBL-interacting serine/threonine-protein kinase 23 (CIPK23) from Arabidopsis thaliana (Mouse-ear cress).